The chain runs to 515 residues: Maturase K (515 aa).

It belongs to the intron maturase 2 family. MatK subfamily.

It is found in the plastid. The protein resides in the chloroplast. Functionally, usually encoded in the trnK tRNA gene intron. Probably assists in splicing its own and other chloroplast group II introns. The sequence is that of Maturase K from Pseudotsuga menziesii (Douglas-fir).